A 245-amino-acid chain; its full sequence is uncharacterized protein (245 aa).

To M.tuberculosis Rv2927c.

This is an uncharacterized protein from Mycobacterium leprae (strain TN).